Reading from the N-terminus, the 246-residue chain is Probable 2-phosphosulfolactate phosphatase (246 aa).

It belongs to the ComB family. Requires Mg(2+) as cofactor.

The catalysed reaction is (2R)-O-phospho-3-sulfolactate + H2O = (2R)-3-sulfolactate + phosphate. The chain is Probable 2-phosphosulfolactate phosphatase from Nostoc punctiforme (strain ATCC 29133 / PCC 73102).